A 128-amino-acid polypeptide reads, in one-letter code: Large ribosomal subunit protein bL12c (128 aa).

It belongs to the bacterial ribosomal protein bL12 family. In terms of assembly, homodimer. Part of the ribosomal stalk of the 50S ribosomal subunit. Forms a multimeric L10(L12)X complex, where L10 forms an elongated spine to which 2 to 4 L12 dimers bind in a sequential fashion. Binds GTP-bound translation factors.

The protein resides in the plastid. The protein localises to the chloroplast. In terms of biological role, forms part of the ribosomal stalk which helps the ribosome interact with GTP-bound translation factors. Is thus essential for accurate translation. The sequence is that of Large ribosomal subunit protein bL12c from Phaeodactylum tricornutum (strain CCAP 1055/1).